A 2204-amino-acid chain; its full sequence is Non-reducing polyketide synthase CTB1 (2204 aa).

Residues 11–250 (AFGDQTYDCS…TRLPITAPYH (240 aa)) are N-terminal acylcarrier protein transacylase domain (SAT). A Ketosynthase family 3 (KS3) domain is found at 382-815 (KSPIAILAAS…GGNTCLVLED (434 aa)). Catalysis depends on for beta-ketoacyl synthase activity residues Cys554, His689, and His734. Residues 923-1224 (AFTGQGSAFE…QTFASINKDK (302 aa)) are malonyl-CoA:ACP transacylase (MAT) domain. The tract at residues 1299–1619 (SSSIHKVITN…VPKRLMHYIV (321 aa)) is product template (PT) domain. Positions 1303–1439 (HKVITNTITA…CKIRFGSLEK (137 aa)) are N-terminal hotdog fold. The 314-residue stretch at 1303–1616 (HKVITNTITA…LQGVPKRLMH (314 aa)) folds into the PKS/mFAS DH domain. His1336 acts as the Proton acceptor; for dehydratase activity in catalysis. The tract at residues 1468–1616 (TYRFSKGMIY…LQGVPKRLMH (149 aa)) is C-terminal hotdog fold. Asp1528 acts as the Proton donor; for dehydratase activity in catalysis. Positions 1625 to 1674 (KASGPPTEKKGSSPPVEKKASAPVAPTRPAIQRKNASIPPPATQVTPQNK) are disordered. Residues 1631–1644 (TEKKGSSPPVEKKA) are compositionally biased toward basic and acidic residues. 2 consecutive Carrier domains span residues 1679–1756 (PSVS…TRLS) and 1783–1865 (DPSP…SGST). 2 positions are modified to O-(pantetheine 4'-phosphoryl)serine: Ser1716 and Ser1824. The span at 1864–1875 (STESFDSTTTKP) shows a compositional bias: polar residues. The segment at 1864-1931 (STESFDSTTT…PPKGRIPPAW (68 aa)) is disordered. The segment covering 1880 to 1895 (ATPPLTDSSASSPPSS) has biased composition (low complexity). The segment at 1945-2195 (ILFLFPDGAG…SGAQMLVEHM (251 aa)) is thioesterase (TE) domain.

Requires pantetheine 4'-phosphate as cofactor.

The enzyme catalyses 6 malonyl-CoA + acetyl-CoA + 6 H(+) = nor-toralactone + 6 CO2 + 7 CoA + 2 H2O. Its pathway is mycotoxin biosynthesis. Functionally, polyketide synthase; part of the gene cluster that mediates the biosynthesis of cercosporin, a light-activated, non-host-selective toxin. The perylenequinone chromophore of cercosporin absorbs light energy to attain an electronically-activated triplet state and produces active oxygen species such as the hydroxyl radical, superoxide, hydrogen peroxide or singlet oxygen upon reaction with oxygen molecules. These reactive oxygen species cause damage to various cellular components including lipids, proteins and nucleic acids. The first step of cercosporin biosynthesis is performed by the polyketide synthase CTB1 which catalyzes the formation of nor-toralactone. The starter unit acyltransferase (SAT) domain of CTB1 initiates polyketide extension by the selective utilization of acetyl-CoA, which is elongated to the heptaketide in the beta-ketoacyl synthase (KS) domain by successive condensations with six malonyl units introduced by the malonyl acyltransferase (MAT) domain. The product template (PT) domain catalyzes C4-C9 and C2-C11 aldol cyclizations and dehydrations to a trihydroxynaphthalene, which is thought to be delivered to the thioesterase (TE) domain for product release. The bifunctional enzyme CTB3 then methylates nor-toralactone to toralactone before conducting an unusual oxidative aromatic ring opening. The O-methyltransferase CTB2 further methylates the nascent OH-6 of the CBT3 product, blocking further oxidation at this site before the reductase CTB6 reduces the 2-oxopropyl ketone at position C7, giving naphthalene. The FAD-dependent monooxygenase CTB5 in concert with the multicopper oxidase CTB12 are responsible for homodimerization of naphthalene with CTB7 installing the dioxepine moiety, finally producing cercosporin. The fasciclin domain-containing protein CTB11 might act with CTB5 and CTB12 whereas the roles of CTB9 and CTB10 have still to be elucidated. This is Non-reducing polyketide synthase CTB1 from Cercospora beticola (Sugarbeet leaf spot fungus).